Here is a 232-residue protein sequence, read N- to C-terminus: Charged multivesicular body protein 4c (232 aa).

2 disordered regions span residues 1–23 (MSKL…PSAQ) and 172–232 (EQEE…AWAT). The intramolecular interaction with C-terminus stretch occupies residues 1-153 (MSKLGKFFKG…EISEAFSQRV (153 aa)). Residues 11 to 23 (SRSSRARAAPSAQ) show a composition bias toward low complexity. Coiled coils occupy residues 21–50 (SAQE…IQRE) and 125–182 (LNKI…KMTS). Residues 154 to 232 (QFADGFDEDE…DFKQLAAWAT (79 aa)) form an intramolecular interaction with N-terminus region. A Phosphoserine; by AURKB modification is found at Ser210.

It belongs to the SNF7 family. In terms of assembly, probable core component of the endosomal sorting required for transport complex III (ESCRT-III). ESCRT-III components are thought to multimerize to form a flat lattice on the perimeter membrane of the endosome. Several assembly forms of ESCRT-III may exist that interact and act sequentially. Self-associates. Interacts with CHMP2A. Interacts with CHMP4A. Interacts with CHMP4B. Interacts with CHMP6. Interacts with VPS4A. Interacts with PDCD6IP; the interaction is direct. Phosphorylated at Ser-210 by AURKB during cytokinesis: together with ZFYVE19/ANCHR, phosphorylated CHMP4C retains abscission-competent VPS4 (VPS4A and/or VPS4B) at the midbody ring until abscission checkpoint signaling is terminated at late cytokinesis.

It localises to the cytoplasm. It is found in the cytosol. The protein localises to the late endosome membrane. The protein resides in the midbody. Its subcellular location is the midbody ring. Functionally, probable core component of the endosomal sorting required for transport complex III (ESCRT-III) which is involved in multivesicular bodies (MVBs) formation and sorting of endosomal cargo proteins into MVBs. MVBs contain intraluminal vesicles (ILVs) that are generated by invagination and scission from the limiting membrane of the endosome and mostly are delivered to lysosomes enabling degradation of membrane proteins, such as stimulated growth factor receptors, lysosomal enzymes and lipids. The MVB pathway appears to require the sequential function of ESCRT-O, -I,-II and -III complexes. ESCRT-III proteins mostly dissociate from the invaginating membrane before the ILV is released. The ESCRT machinery also functions in topologically equivalent membrane fission events, such as the terminal stages of cytokinesis. Key component of the cytokinesis checkpoint, a process required to delay abscission to prevent both premature resolution of intercellular chromosome bridges and accumulation of DNA damage: upon phosphorylation by AURKB, together with ZFYVE19/ANCHR, retains abscission-competent VPS4 (VPS4A and/or VPS4B) at the midbody ring until abscission checkpoint signaling is terminated at late cytokinesis. Deactivation of AURKB results in dephosphorylation of CHMP4C followed by its dissociation from ANCHR and VPS4 and subsequent abscission. ESCRT-III proteins are believed to mediate the necessary vesicle extrusion and/or membrane fission activities, possibly in conjunction with the AAA ATPase VPS4. CHMP4A/B/C are required for the exosomal release of SDCBP, CD63 and syndecan. This chain is Charged multivesicular body protein 4c (Chmp4c), found in Rattus norvegicus (Rat).